A 232-amino-acid chain; its full sequence is Platelet-activating factor acetylhydrolase IB subunit alpha1 (232 aa).

The tract at residues 1–20 (MSGEGENPASKPTPVQDVQG) is disordered. The residue at position 2 (Ser-2) is an N-acetylserine. A Phosphoserine modification is found at Ser-2. Residues Ser-48, Asp-193, and His-196 contribute to the active site.

This sequence belongs to the 'GDSL' lipolytic enzyme family. Platelet-activating factor acetylhydrolase IB beta/gamma subunits subfamily. As to quaternary structure, forms a catalytic dimer which is either homodimer (alpha1/alpha1 homodimer) or heterodimer with PAFAH1B2 (alpha1/alpha2 heterodimer). Component of the cytosolic (PAF-AH (I)) heterotetrameric enzyme, which is composed of PAFAH1B1 (beta), PAFAH1B2 (alpha2) and PAFAH1B3 (alpha1) subunits. The catalytic activity of the enzyme resides in the alpha1 (PAFAH1B3) and alpha2 (PAFAH1B2) subunits, whereas the beta subunit (PAFAH1B1) has regulatory activity. Trimer formation is not essential for the catalytic activity. Interacts with VLDLR; this interaction may modulate the Reelin pathway.

The protein localises to the cytoplasm. It catalyses the reaction a 1-O-alkyl-2-acetyl-sn-glycero-3-phosphocholine + H2O = a 1-O-alkyl-sn-glycero-3-phosphocholine + acetate + H(+). The enzyme catalyses 1-O-hexadecyl-2-acetyl-sn-glycero-3-phosphocholine + H2O = 1-O-hexadecyl-sn-glycero-3-phosphocholine + acetate + H(+). The catalysed reaction is 1-O-hexadecyl-2-acetyl-sn-glycero-3-phosphate + H2O = 1-O-hexadecyl-sn-glycero-3-phosphate + acetate + H(+). With respect to regulation, beta subunit (PAFAH1B1) inhibits the acetylhydrolase activity of the alpha1/alpha1 catalytic homodimer. Functionally, alpha1 catalytic subunit of the cytosolic type I platelet-activating factor (PAF) acetylhydrolase (PAF-AH (I)) heterotetrameric enzyme that catalyzes the hydrolyze of the acetyl group at the sn-2 position of PAF and its analogs and modulates the action of PAF. The activity and substrate specificity of PAF-AH (I) are affected by its subunit composition. Both alpha1/alpha1 homodimer (PAFAH1B3/PAFAH1B3 homodimer) and alpha1/alpha2 heterodimer(PAFAH1B3/PAFAH1B2 heterodimer) hydrolyze 1-O-alkyl-2-acetyl-sn-glycero-3-phosphoric acid (AAGPA) more efficiently than PAF, but they have little hydrolytic activity towards 1-O-alkyl-2-acetyl-sn-glycero-3-phosphorylethanolamine (AAGPE). Plays an important role during the development of brain. The sequence is that of Platelet-activating factor acetylhydrolase IB subunit alpha1 from Mus musculus (Mouse).